The primary structure comprises 636 residues: MAAAEVPVPSGYFTQIKEQKLKPGDLEEEKEEDGVQRVEAQEGVVKEVEAENSCLLLEARAPVESDRRILTLQTVHLESQDVHLQGLGWLSVPHSEELSGTVPEAEGILQLPSVLWLDPEPQLSLQHCVTVSIPEELYPPEELQRIHFHLLRENVLMAEENPELTPDLDESTALKKPEEDEKDQLPPQGETDKREERLLLLEMKPKEGKDDEIVLTISHLSLEEQQDPPAANQTSVPGAKAAKPKRRRQTKGKPQSFQCDTCPFTSSKLSTFNRHIKIHSNERPHLCHLCLKAFRTVTLLRNHVNTHTGTRPHKCRDCDMAFVTSGELVRHRRYKHTYEKPFKCSLCKYASVEASKMKRHIRSHTGERPFQCCQCAYASRDSYKLKRHMRTHSGEKPYECPTCHVRFTQSGTMKIHIAQKHGENVPKYECPHCATIIARKSDLRVHLRNLHSQSPEEMKCRYCPAGFHERYALIQHQRTHKNEKKFKCKQCDYACKQERCLKAHMRMHTGEKPFSCLACNKHFRQKQLLTVHLRKYHDPNFVPNLHLCLKCDKRFSRWSNLQRHRKKCDPEHETLAPNKDRRPVTRTQASEGEAGHKEGEPQCPGEQALGHQGEAAGSQSPDHGLTCEIIFNMMDK.

3 disordered regions span residues 17-38 (KEQKLKPGDLEEEKEEDGVQRV), 160-195 (ENPELTPDLDESTALKKPEEDEKDQLPPQGETDKRE), and 222-257 (LEEQQDPPAANQTSVPGAKAAKPKRRRQTKGKPQSF). The span at 160-170 (ENPELTPDLDE) shows a compositional bias: acidic residues. The segment covering 242-251 (AKPKRRRQTK) has biased composition (basic residues). 11 consecutive C2H2-type zinc fingers follow at residues 257–279 (FQCDTCPFTSSKLSTFNRHIKIH), 285–307 (HLCHLCLKAFRTVTLLRNHVNTH), 313–336 (HKCRDCDMAFVTSGELVRHRRYKH), 342–364 (FKCSLCKYASVEASKMKRHIRSH), 370–392 (FQCCQCAYASRDSYKLKRHMRTH), 398–421 (YECPTCHVRFTQSGTMKIHIAQKH), 428–451 (YECPHCATIIARKSDLRVHLRNLH), 458–480 (MKCRYCPAGFHERYALIQHQRTH), 486–508 (FKCKQCDYACKQERCLKAHMRMH), 514–537 (FSCLACNKHFRQKQLLTVHLRKYH), and 546–572 (HLCLKCDKRFSRWSNLQRHRKKCDPEH). The interval 562–624 (QRHRKKCDPE…AAGSQSPDHG (63 aa)) is disordered. Positions 568-583 (CDPEHETLAPNKDRRP) are enriched in basic and acidic residues.

It belongs to the CTCF zinc-finger protein family. In terms of assembly, interacts with histones, PRMT7 and SETD1A. Interacts (via N-terminus) with BAG6/BAT3. As to expression, testis-specific.

Its subcellular location is the cytoplasm. The protein localises to the nucleus. Functionally, testis-specific DNA binding protein responsible for insulator function, nuclear architecture and transcriptional control, which probably acts by recruiting epigenetic chromatin modifiers. Plays a key role in gene imprinting in male germline, by participating in the establishment of differential methylation at the IGF2/H19 imprinted control region (ICR). Directly binds the unmethylated H19 ICR and recruits the PRMT7 methyltransferase, leading to methylate histone H4 'Arg-3' to form H4R3sme2. This probably leads to recruit de novo DNA methyltransferases at these sites. Seems to act as tumor suppressor. In association with DNMT1 and DNMT3B, involved in activation of BAG1 gene expression by binding to its promoter. Required for dimethylation of H3 lysine 4 (H3K4me2) of MYC and BRCA1 promoters. The protein is Transcriptional repressor CTCFL (Ctcfl) of Mus musculus (Mouse).